Consider the following 1367-residue polypeptide: Paired amphipathic helix protein Sin3-like 2 (1367 aa).

A disordered region spans residues 14–44 (QFKRPLGSSRGESYEQSPITGGGSIGEGGIN). Residues 33-42 (TGGGSIGEGG) show a composition bias toward gly residues. 2 consecutive PAH domains span residues 46-116 (QKLT…LPKG) and 130-200 (KTVE…LPDS). Positions 212–322 (SQAQRYDDRG…EAYSGPASHS (111 aa)) are disordered. 2 stretches are compositionally biased toward basic and acidic residues: residues 230–286 (MFME…SRDL) and 299–311 (FSEK…RMEG). One can recognise a PAH 3 domain in the interval 327–396 (LKSMYNQAFL…DEFNQFFERC (70 aa)). 4 disordered regions span residues 417-446 (EENL…KERS), 786-883 (DVHA…LSKP), 912-946 (QSDT…DSED), and 958-1031 (ATAK…EGME). Basic and acidic residues-rich tracts occupy residues 424–446 (VKGE…KERS) and 806–819 (SSGK…DLAN). Polar residues-rich tracts occupy residues 851–876 (ATSS…SSGS) and 912–923 (QSDTSKANSNYD). Over residues 958–967 (ATAKTEHSVE) the composition is skewed to basic and acidic residues. Composition is skewed to acidic residues over residues 968–989 (AEGE…EAGE) and 997–1016 (IGDE…EHDE). At Ser-1023 the chain carries Phosphoserine.

It localises to the nucleus. Its function is as follows. Acts as a transcriptional repressor. Plays roles in regulating gene expression and genome stability. The chain is Paired amphipathic helix protein Sin3-like 2 (SNL2) from Arabidopsis thaliana (Mouse-ear cress).